A 315-amino-acid chain; its full sequence is Cobalamin biosynthesis protein CobD (315 aa).

The next 5 helical transmembrane spans lie at 54-74 (GLLF…ILFL), 78-98 (IAYW…LAMT), 152-172 (ADGV…LALM), 203-223 (IANF…SFIL), and 295-315 (LLYM…LLLF).

Belongs to the CobD/CbiB family.

The protein resides in the cell membrane. Its pathway is cofactor biosynthesis; adenosylcobalamin biosynthesis. Functionally, converts cobyric acid to cobinamide by the addition of aminopropanol on the F carboxylic group. In Listeria monocytogenes serovar 1/2a (strain ATCC BAA-679 / EGD-e), this protein is Cobalamin biosynthesis protein CobD.